Reading from the N-terminus, the 151-residue chain is uncharacterized protein (151 aa).

The tract at residues 123–151 (PAGQNAGTGPAQKLKTDETRCYERRGGSQ) is disordered. Residues 136–151 (LKTDETRCYERRGGSQ) are compositionally biased toward basic and acidic residues.

This is an uncharacterized protein from Triticum aestivum (Wheat).